Reading from the N-terminus, the 273-residue chain is Dermonecrotic toxin LarSicTox-alphaVII1 (273 aa).

Residue His-5 is part of the active site. Residues Glu-25 and Asp-27 each contribute to the Mg(2+) site. The active-site Nucleophile is His-41. Intrachain disulfides connect Cys-45-Cys-51 and Cys-47-Cys-192. Asp-85 is a Mg(2+) binding site.

Belongs to the arthropod phospholipase D family. Class II subfamily. Mg(2+) is required as a cofactor. Expressed by the venom gland.

The protein localises to the secreted. The catalysed reaction is an N-(acyl)-sphingosylphosphocholine = an N-(acyl)-sphingosyl-1,3-cyclic phosphate + choline. The enzyme catalyses an N-(acyl)-sphingosylphosphoethanolamine = an N-(acyl)-sphingosyl-1,3-cyclic phosphate + ethanolamine. It carries out the reaction a 1-acyl-sn-glycero-3-phosphocholine = a 1-acyl-sn-glycero-2,3-cyclic phosphate + choline. It catalyses the reaction a 1-acyl-sn-glycero-3-phosphoethanolamine = a 1-acyl-sn-glycero-2,3-cyclic phosphate + ethanolamine. Functionally, dermonecrotic toxins cleave the phosphodiester linkage between the phosphate and headgroup of certain phospholipids (sphingolipid and lysolipid substrates), forming an alcohol (often choline) and a cyclic phosphate. This toxin acts on sphingomyelin (SM). It may also act on ceramide phosphoethanolamine (CPE), lysophosphatidylcholine (LPC) and lysophosphatidylethanolamine (LPE), but not on lysophosphatidylserine (LPS), and lysophosphatidylglycerol (LPG). It acts by transphosphatidylation, releasing exclusively cyclic phosphate products as second products. Induces dermonecrosis, hemolysis, increased vascular permeability, edema, inflammatory response, and platelet aggregation. The protein is Dermonecrotic toxin LarSicTox-alphaVII1 of Loxosceles arizonica (Arizona brown spider).